A 392-amino-acid chain; its full sequence is MSKHIVILGAGYGGVLSALTVRKHYTKEQARVTVVNKYPTHQIITELHRLAAGNVSEKAVAMPLEKLFKGKDIDLKIAEVSSFSVDKKEVALADGSTLTYDALVVGLGSVTAYFGIPGLEENSMVLKSAADANKVFQHVEDRVREYSKTKNEADATILIGGGGLTGVELVGELADIMPNLAKKYGVDHKEIKLKLVEAGPKILPVLPDDLIERATASLEKRGVEFLTGLPVTNVEGNVIDLKDGSKVVANTFVWTGGVQGNPLVGESGLEVNRGRATVNDFLQSTSHEDVFVAGDSAVYFGPDGRPYPPTAQIAWQMGELIGYNLFAYLEGKTLETFKPVNSGTLASLGRKDAVAIIGANSTPLKGLPASLMKEASNVRYLTHIKGLFSLAY.

It belongs to the NADH dehydrogenase family. FAD is required as a cofactor.

The sequence is that of NADH dehydrogenase-like protein YjlD (yjlD) from Bacillus subtilis (strain 168).